The primary structure comprises 384 residues: Erythronate-4-phosphate dehydrogenase (384 aa).

S45 and T66 together coordinate substrate. The NAD(+) site is built by D147 and T177. R210 is a catalytic residue. D234 provides a ligand contact to NAD(+). E239 is a catalytic residue. The Proton donor role is filled by H256. An NAD(+)-binding site is contributed by G259. Y260 contacts substrate.

The protein belongs to the D-isomer specific 2-hydroxyacid dehydrogenase family. PdxB subfamily. As to quaternary structure, homodimer.

Its subcellular location is the cytoplasm. The catalysed reaction is 4-phospho-D-erythronate + NAD(+) = (R)-3-hydroxy-2-oxo-4-phosphooxybutanoate + NADH + H(+). It participates in cofactor biosynthesis; pyridoxine 5'-phosphate biosynthesis; pyridoxine 5'-phosphate from D-erythrose 4-phosphate: step 2/5. Its function is as follows. Catalyzes the oxidation of erythronate-4-phosphate to 3-hydroxy-2-oxo-4-phosphonooxybutanoate. This chain is Erythronate-4-phosphate dehydrogenase, found in Marinobacter nauticus (strain ATCC 700491 / DSM 11845 / VT8) (Marinobacter aquaeolei).